Here is a 415-residue protein sequence, read N- to C-terminus: Probable glucan 1,3-beta-glucosidase A (415 aa).

The signal sequence occupies residues 1–22; that stretch reads MLSRLSQTALVALSLMTVLTEA. Glutamate 210 serves as the catalytic Proton donor. 2 disulfides stabilise this stretch: cysteine 290–cysteine 414 and cysteine 315–cysteine 341. The active-site Nucleophile is the glutamate 307. Positions 335-359 are disordered; sequence SPRYGDCGNKRQGSSSGLSEQERSD.

The protein belongs to the glycosyl hydrolase 5 (cellulase A) family. In terms of assembly, monomer. The cofactor is Mn(2+).

The protein localises to the secreted. It carries out the reaction Successive hydrolysis of beta-D-glucose units from the non-reducing ends of (1-&gt;3)-beta-D-glucans, releasing alpha-glucose.. Its function is as follows. Beta-glucanases participate in the metabolism of beta-glucan, the main structural component of the cell wall. It could also function biosynthetically as a transglycosylase. In Aspergillus clavatus (strain ATCC 1007 / CBS 513.65 / DSM 816 / NCTC 3887 / NRRL 1 / QM 1276 / 107), this protein is Probable glucan 1,3-beta-glucosidase A (exgA).